The primary structure comprises 495 residues: Aspartyl/glutamyl-tRNA(Asn/Gln) amidotransferase subunit B (495 aa).

This sequence belongs to the GatB/GatE family. GatB subfamily. As to quaternary structure, heterotrimer of A, B and C subunits.

It carries out the reaction L-glutamyl-tRNA(Gln) + L-glutamine + ATP + H2O = L-glutaminyl-tRNA(Gln) + L-glutamate + ADP + phosphate + H(+). The catalysed reaction is L-aspartyl-tRNA(Asn) + L-glutamine + ATP + H2O = L-asparaginyl-tRNA(Asn) + L-glutamate + ADP + phosphate + 2 H(+). Functionally, allows the formation of correctly charged Asn-tRNA(Asn) or Gln-tRNA(Gln) through the transamidation of misacylated Asp-tRNA(Asn) or Glu-tRNA(Gln) in organisms which lack either or both of asparaginyl-tRNA or glutaminyl-tRNA synthetases. The reaction takes place in the presence of glutamine and ATP through an activated phospho-Asp-tRNA(Asn) or phospho-Glu-tRNA(Gln). The sequence is that of Aspartyl/glutamyl-tRNA(Asn/Gln) amidotransferase subunit B from Halobacterium salinarum (strain ATCC 700922 / JCM 11081 / NRC-1) (Halobacterium halobium).